We begin with the raw amino-acid sequence, 279 residues long: 3-methyl-2-oxobutanoate hydroxymethyltransferase (279 aa).

2 residues coordinate Mg(2+): aspartate 49 and aspartate 88. 3-methyl-2-oxobutanoate-binding positions include 49 to 50 (DS), aspartate 88, and lysine 118. Glutamate 120 is a binding site for Mg(2+). Glutamate 187 functions as the Proton acceptor in the catalytic mechanism.

Belongs to the PanB family. As to quaternary structure, homodecamer; pentamer of dimers. Mg(2+) is required as a cofactor.

The protein localises to the cytoplasm. The enzyme catalyses 3-methyl-2-oxobutanoate + (6R)-5,10-methylene-5,6,7,8-tetrahydrofolate + H2O = 2-dehydropantoate + (6S)-5,6,7,8-tetrahydrofolate. Its pathway is cofactor biosynthesis; (R)-pantothenate biosynthesis; (R)-pantoate from 3-methyl-2-oxobutanoate: step 1/2. Functionally, catalyzes the reversible reaction in which hydroxymethyl group from 5,10-methylenetetrahydrofolate is transferred onto alpha-ketoisovalerate to form ketopantoate. This chain is 3-methyl-2-oxobutanoate hydroxymethyltransferase, found in Agrobacterium fabrum (strain C58 / ATCC 33970) (Agrobacterium tumefaciens (strain C58)).